Consider the following 162-residue polypeptide: Eukaryotic translation initiation factor 5 (162 aa).

Positions P59 to E162 are disordered. Positions G85–S109 are enriched in polar residues. A compositionally biased stretch (basic and acidic residues) spans D148–E162.

The protein belongs to the eIF-2-beta/eIF-5 family.

In terms of biological role, catalyzes the hydrolysis of GTP bound to the 40S ribosomal initiation complex (40S.mRNA.Met-tRNA[F].eIF-2.GTP) with the subsequent joining of a 60S ribosomal subunit resulting in the release of eIF-2 and the guanine nucleotide. The subsequent joining of a 60S ribosomal subunit results in the formation of a functional 80S initiation complex (80S.mRNA.Met-tRNA[F]). The polypeptide is Eukaryotic translation initiation factor 5 (Tribolium castaneum (Red flour beetle)).